A 673-amino-acid polypeptide reads, in one-letter code: UvrABC system protein B (673 aa).

The region spanning 26-414 (ANFEAGLAKQ…AGEITELVVR (389 aa)) is the Helicase ATP-binding domain. 39 to 46 (GVTGSGKT) is an ATP binding site. Residues 92–115 (YYDYYQPEAYVPSSDTFIEKDSSI) carry the Beta-hairpin motif. The 167-residue stretch at 431–597 (QVDDLMSEVH…SVARPISDIM (167 aa)) folds into the Helicase C-terminal domain. The segment at 601 to 626 (REDAAEKKAGKGRSKSRQVAEEPADY) is disordered. The 36-residue stretch at 635 to 670 (AGKLKALEQKMYQHAKDLEFEAAAQIRDQILKLKAA) folds into the UVR domain.

This sequence belongs to the UvrB family. Forms a heterotetramer with UvrA during the search for lesions. Interacts with UvrC in an incision complex.

It is found in the cytoplasm. The UvrABC repair system catalyzes the recognition and processing of DNA lesions. A damage recognition complex composed of 2 UvrA and 2 UvrB subunits scans DNA for abnormalities. Upon binding of the UvrA(2)B(2) complex to a putative damaged site, the DNA wraps around one UvrB monomer. DNA wrap is dependent on ATP binding by UvrB and probably causes local melting of the DNA helix, facilitating insertion of UvrB beta-hairpin between the DNA strands. Then UvrB probes one DNA strand for the presence of a lesion. If a lesion is found the UvrA subunits dissociate and the UvrB-DNA preincision complex is formed. This complex is subsequently bound by UvrC and the second UvrB is released. If no lesion is found, the DNA wraps around the other UvrB subunit that will check the other stand for damage. The polypeptide is UvrABC system protein B (Xanthomonas campestris pv. campestris (strain 8004)).